Reading from the N-terminus, the 335-residue chain is Ubiquinone biosynthesis protein COQ4, mitochondrial (335 aa).

The transit peptide at 1 to 10 directs the protein to the mitochondrion; the sequence is MLRLSLLRST. The Zn(2+) site is built by histidine 210, aspartate 211, histidine 214, and glutamate 226.

Belongs to the COQ4 family. In terms of assembly, component of a multi-subunit COQ enzyme complex, composed of at least COQ3, COQ4, COQ5, COQ6, COQ7 and COQ9. Interacts with COQ3. Zn(2+) is required as a cofactor.

It is found in the mitochondrion inner membrane. It carries out the reaction 4-hydroxy-3-methoxy-5-(all-trans-hexaprenyl)benzoate + H(+) = 2-methoxy-6-(all-trans-hexaprenyl)phenol + CO2. Its pathway is cofactor biosynthesis; ubiquinone biosynthesis. In terms of biological role, lyase that catalyzes the C1-decarboxylation of 4-hydroxy-3-methoxy-5-(all-trans-hexaprenyl)benzoic acid into 2-methoxy-6-(all-trans-hexaprenyl)phenol during ubiquinone biosynthesis. May play a role in organizing a multi-subunit COQ enzyme complex required for coenzyme Q biosynthesis. Required for steady-state levels of COQ3, COQ4, COQ6, COQ7 and COQ9 polypeptides. The polypeptide is Ubiquinone biosynthesis protein COQ4, mitochondrial (Saccharomyces cerevisiae (strain ATCC 204508 / S288c) (Baker's yeast)).